The chain runs to 146 residues: Leghemoglobin 2 (146 aa).

A Globin domain is found at 2 to 146 (GFTAQQDALV…LAAAIKKAMS (145 aa)). Residue Tyr30 is modified to Nitrated tyrosine. Ser45 lines the heme b pocket. Phosphoserine is present on Ser45. Residue His61 coordinates O2. Heme b is bound by residues Lys64, His93, and Lys96. A Nitrated tyrosine modification is found at Tyr134.

This sequence belongs to the plant globin family. As to quaternary structure, monomer. Nitrated in effective nodules and particularly in hypoxic conditions; this mechanism may play a protective role in the symbiosis by buffering toxic peroxynitrite NO(2)(-). Nitration level decrease during nodule senescence. In terms of processing, phosphorylation at Ser-45 disrupts the molecular environment of its porphyrin ring oxygen binding pocket, thus leading to a reduced oxygen consumption and to the delivery of oxygen O(2) to symbiosomes. As to expression, specifically and strongly expressed in root nodules and at low levels in seedlings.

The protein resides in the cytoplasm. The protein localises to the cytosol. Its subcellular location is the nucleus. Functionally, leghemoglobin that reversibly binds oxygen O(2) through a pentacoordinated heme iron. In root nodules, facilitates the diffusion of oxygen to the bacteroids while preventing the bacterial nitrogenase from being inactivated by buffering dioxygen, nitric oxide and carbon monoxide, and promoting the formation of reactive oxygen species (ROS, e.g. H(2)O(2)). This role is essential for symbiotic nitrogen fixation (SNF). This is Leghemoglobin 2 from Lotus japonicus (Lotus corniculatus var. japonicus).